The following is a 515-amino-acid chain: 1-pyrroline-5-carboxylate dehydrogenase (515 aa).

Active-site residues include Glu286 and Cys320.

It belongs to the aldehyde dehydrogenase family. RocA subfamily.

The catalysed reaction is L-glutamate 5-semialdehyde + NAD(+) + H2O = L-glutamate + NADH + 2 H(+). It functions in the pathway amino-acid degradation; L-proline degradation into L-glutamate; L-glutamate from L-proline: step 2/2. The protein is 1-pyrroline-5-carboxylate dehydrogenase (rocA) of Bacillus subtilis (strain 168).